The following is a 343-amino-acid chain: Mitochondrial distribution and morphology protein 34 (343 aa).

An SMP-LTD domain is found at 1 to 196 (MSFVFPSWST…LPGIIHRLSQ (196 aa)). Disordered regions lie at residues 227–255 (EVEE…IGPG) and 300–325 (GAGT…KAKR). Residues 306–317 (SGRASLASSSVG) show a composition bias toward low complexity.

This sequence belongs to the MDM34 family. Component of the ER-mitochondria encounter structure (ERMES) or MDM complex, composed of MMM1, MDM10, MDM12 and MDM34.

Its subcellular location is the mitochondrion outer membrane. Functionally, component of the ERMES/MDM complex, which serves as a molecular tether to connect the endoplasmic reticulum (ER) and mitochondria. Components of this complex are involved in the control of mitochondrial shape and protein biogenesis, and function in nonvesicular lipid trafficking between the ER and mitochondria. MDM34 is required for the interaction of the ER-resident membrane protein MMM1 and the outer mitochondrial membrane-resident beta-barrel protein MDM10. In Cryptococcus neoformans var. neoformans serotype D (strain B-3501A) (Filobasidiella neoformans), this protein is Mitochondrial distribution and morphology protein 34.